We begin with the raw amino-acid sequence, 120 residues long: Glycine cleavage system H protein (120 aa).

Positions 17–99 constitute a Lipoyl-binding domain; it reads VATVGITEHA…QGAAWFFKLK (83 aa). Residue K58 is modified to N6-lipoyllysine.

Belongs to the GcvH family. The glycine cleavage system is composed of four proteins: P, T, L and H. It depends on (R)-lipoate as a cofactor.

Its function is as follows. The glycine cleavage system catalyzes the degradation of glycine. The H protein shuttles the methylamine group of glycine from the P protein to the T protein. The chain is Glycine cleavage system H protein from Sinorhizobium medicae (strain WSM419) (Ensifer medicae).